Reading from the N-terminus, the 529-residue chain is Bifunctional purine biosynthesis protein PurH (529 aa).

Residues 1–148 (MQQRRPVRRA…KNHKDVAIVV (148 aa)) enclose the MGS-like domain. Lys287 is modified (N6-acetyllysine).

Belongs to the PurH family.

The enzyme catalyses (6R)-10-formyltetrahydrofolate + 5-amino-1-(5-phospho-beta-D-ribosyl)imidazole-4-carboxamide = 5-formamido-1-(5-phospho-D-ribosyl)imidazole-4-carboxamide + (6S)-5,6,7,8-tetrahydrofolate. It carries out the reaction IMP + H2O = 5-formamido-1-(5-phospho-D-ribosyl)imidazole-4-carboxamide. It functions in the pathway purine metabolism; IMP biosynthesis via de novo pathway; 5-formamido-1-(5-phospho-D-ribosyl)imidazole-4-carboxamide from 5-amino-1-(5-phospho-D-ribosyl)imidazole-4-carboxamide (10-formyl THF route): step 1/1. Its pathway is purine metabolism; IMP biosynthesis via de novo pathway; IMP from 5-formamido-1-(5-phospho-D-ribosyl)imidazole-4-carboxamide: step 1/1. This Escherichia coli (strain 55989 / EAEC) protein is Bifunctional purine biosynthesis protein PurH.